The primary structure comprises 297 residues: Acetyl-coenzyme A carboxylase carboxyl transferase subunit beta (297 aa).

One can recognise a CoA carboxyltransferase N-terminal domain in the interval 25–294; the sequence is LWVKCPETGQ…LPPKGRLPRP (270 aa).

Belongs to the AccD/PCCB family. Acetyl-CoA carboxylase is a heterohexamer composed of biotin carboxyl carrier protein (AccB), biotin carboxylase (AccC) and two subunits each of ACCase subunit alpha (AccA) and ACCase subunit beta (AccD).

Its subcellular location is the cytoplasm. The enzyme catalyses N(6)-carboxybiotinyl-L-lysyl-[protein] + acetyl-CoA = N(6)-biotinyl-L-lysyl-[protein] + malonyl-CoA. It functions in the pathway lipid metabolism; malonyl-CoA biosynthesis; malonyl-CoA from acetyl-CoA: step 1/1. Functionally, component of the acetyl coenzyme A carboxylase (ACC) complex. Biotin carboxylase (BC) catalyzes the carboxylation of biotin on its carrier protein (BCCP) and then the CO(2) group is transferred by the transcarboxylase to acetyl-CoA to form malonyl-CoA. The chain is Acetyl-coenzyme A carboxylase carboxyl transferase subunit beta from Xanthobacter autotrophicus (strain ATCC BAA-1158 / Py2).